A 283-amino-acid chain; its full sequence is Bis(5'-nucleosyl)-tetraphosphatase, symmetrical (283 aa).

Belongs to the Ap4A hydrolase family.

It carries out the reaction P(1),P(4)-bis(5'-adenosyl) tetraphosphate + H2O = 2 ADP + 2 H(+). In terms of biological role, hydrolyzes diadenosine 5',5'''-P1,P4-tetraphosphate to yield ADP. In Pseudomonas fluorescens (strain SBW25), this protein is Bis(5'-nucleosyl)-tetraphosphatase, symmetrical.